The following is a 462-amino-acid chain: Glycine--tRNA ligase (462 aa).

2 residues coordinate substrate: Arg100 and Glu174. ATP contacts are provided by residues 206–208, 216–221, 290–291, and 334–337; these read RNE, FRTREF, EL, and GVDR. Residue 221–225 coordinates substrate; it reads FEQME. Residue 330 to 334 coordinates substrate; it reads EPSVG.

Belongs to the class-II aminoacyl-tRNA synthetase family. As to quaternary structure, homodimer.

The protein localises to the cytoplasm. The catalysed reaction is tRNA(Gly) + glycine + ATP = glycyl-tRNA(Gly) + AMP + diphosphate. Its function is as follows. Catalyzes the attachment of glycine to tRNA(Gly). This chain is Glycine--tRNA ligase, found in Alkaliphilus oremlandii (strain OhILAs) (Clostridium oremlandii (strain OhILAs)).